A 54-amino-acid polypeptide reads, in one-letter code: uncharacterized protein (54 aa).

Residues 32–52 (LFSLLVLIILCFIDPILFYFI) traverse the membrane as a helical segment.

It is found in the host membrane. This is an uncharacterized protein from Cassava vein mosaic virus (CsVMV).